The primary structure comprises 275 residues: Large ribosomal subunit protein uL2c (275 aa).

Residues 223-255 (VVMNPVDHPHGGGEGRAPIGRSRPVTPWGRPAL) are disordered.

This sequence belongs to the universal ribosomal protein uL2 family. In terms of assembly, part of the 50S ribosomal subunit.

The protein resides in the plastid. Its subcellular location is the chloroplast. The sequence is that of Large ribosomal subunit protein uL2c (rpl2) from Pleurastrum terricola (Filamentous green alga).